A 234-amino-acid polypeptide reads, in one-letter code: Large ribosomal subunit protein uL1 (234 aa).

The protein belongs to the universal ribosomal protein uL1 family. Part of the 50S ribosomal subunit.

Binds directly to 23S rRNA. The L1 stalk is quite mobile in the ribosome, and is involved in E site tRNA release. Its function is as follows. Protein L1 is also a translational repressor protein, it controls the translation of the L11 operon by binding to its mRNA. This is Large ribosomal subunit protein uL1 from Pectobacterium carotovorum subsp. carotovorum (strain PC1).